The primary structure comprises 494 residues: Aspartyl/glutamyl-tRNA(Asn/Gln) amidotransferase subunit B (494 aa).

The protein belongs to the GatB/GatE family. GatB subfamily. Heterotrimer of A, B and C subunits.

The enzyme catalyses L-glutamyl-tRNA(Gln) + L-glutamine + ATP + H2O = L-glutaminyl-tRNA(Gln) + L-glutamate + ADP + phosphate + H(+). It catalyses the reaction L-aspartyl-tRNA(Asn) + L-glutamine + ATP + H2O = L-asparaginyl-tRNA(Asn) + L-glutamate + ADP + phosphate + 2 H(+). In terms of biological role, allows the formation of correctly charged Asn-tRNA(Asn) or Gln-tRNA(Gln) through the transamidation of misacylated Asp-tRNA(Asn) or Glu-tRNA(Gln) in organisms which lack either or both of asparaginyl-tRNA or glutaminyl-tRNA synthetases. The reaction takes place in the presence of glutamine and ATP through an activated phospho-Asp-tRNA(Asn) or phospho-Glu-tRNA(Gln). The chain is Aspartyl/glutamyl-tRNA(Asn/Gln) amidotransferase subunit B from Synechococcus sp. (strain ATCC 27144 / PCC 6301 / SAUG 1402/1) (Anacystis nidulans).